The chain runs to 640 residues: Chaperone protein DnaK (640 aa).

T199 bears the Phosphothreonine; by autocatalysis mark. Positions 603 to 640 (YAAGETESSAAEPGEPQEKTVDAEVVDAEFEEVKDDKK) are disordered. Positions 626–640 (EVVDAEFEEVKDDKK) are enriched in acidic residues.

The protein belongs to the heat shock protein 70 family.

Its function is as follows. Acts as a chaperone. This Methylobacillus flagellatus (strain ATCC 51484 / DSM 6875 / VKM B-1610 / KT) protein is Chaperone protein DnaK.